The primary structure comprises 45 residues: Large ribosomal subunit protein bL34 (45 aa).

This sequence belongs to the bacterial ribosomal protein bL34 family.

This chain is Large ribosomal subunit protein bL34 (rpmH), found in Streptomyces bikiniensis.